Here is a 71-residue protein sequence, read N- to C-terminus: UPF0499 protein ACLA_083080 (71 aa).

Positions 1-18 (MKFLNILTLAFITGMASA) are cleaved as a signal peptide. 3 disulfide bridges follow: Cys44–Cys58, Cys48–Cys61, and Cys54–Cys68.

The protein belongs to the UPF0499 family.

The protein localises to the secreted. This is UPF0499 protein ACLA_083080 from Aspergillus clavatus (strain ATCC 1007 / CBS 513.65 / DSM 816 / NCTC 3887 / NRRL 1 / QM 1276 / 107).